We begin with the raw amino-acid sequence, 348 residues long: Probable mitochondrial adenine nucleotide transporter BTL1 (348 aa).

3 Solcar repeats span residues 46–129 (SREA…VKRA), 157–241 (SWIS…MKTS), and 251–338 (LSRP…WKDI). Helical transmembrane passes span 52–72 (FLSG…LETI), 104–124 (GNEI…GTFE), 156–176 (ISWI…STLV), 213–233 (FYAG…CYYF), 256–276 (MLVL…PLEV), and 321–341 (VMPS…ILLA).

This sequence belongs to the mitochondrial carrier (TC 2.A.29) family.

The protein localises to the mitochondrion inner membrane. Functionally, probable mitochondrial adenylate carrier that catalyzes the transport of ATP, ADP and AMP. In Arabidopsis thaliana (Mouse-ear cress), this protein is Probable mitochondrial adenine nucleotide transporter BTL1.